A 151-amino-acid polypeptide reads, in one-letter code: Calcium-binding protein SPEC 2C (151 aa).

4 consecutive EF-hand domains span residues 10–45 (EQRK…IEIE), 46–78 (LTQE…KAEQ), 81–116 (GKGA…CTDP), and 118–151 (MTKE…QSSY). Residues Asp23, Asp25, Asp27, Lys29, Glu34, Asp59, Asp61, Ser63, Glu70, Asp94, Asp96, Ser98, Ser100, Glu105, Asp131, Asp135, Glu137, and Glu142 each coordinate Ca(2+).

In terms of tissue distribution, found in cell lineages giving rise to the aboral ectoderm, a squamous epithelium covering the surface of the late stage embryo and larva.

Functionally, calcium-binding protein involved in larval development and metamorphosis. Likely to function as calcium buffers mediating the transport of calcium from the sea water to the blastocoel where calcium is required for skeleton formation. In Strongylocentrotus purpuratus (Purple sea urchin), this protein is Calcium-binding protein SPEC 2C (SPEC2C).